The sequence spans 534 residues: NAD(P)H-quinone oxidoreductase chain 4 (534 aa).

Helical transmembrane passes span 6 to 26 (FPWLSTLIFFPIMATVALPFI), 38 to 58 (WYALVIGLIDFVLLIYAFYTQ), 91 to 111 (MPLILLTGFITSLAILASWPV), 117 to 137 (LFYFLILAMYGGQIAVFAVQD), 138 to 158 (LLVFFLVWELELVPVYLLLSI), 171 to 191 (FILYTAISSLFILVAALAMAF), 214 to 234 (LLCYTGFLVAFAVKLPIVPLH), 245 to 265 (TAPVHMLLAGILLKMGGYALI), 279 to 299 (FAPALIILGVVNIIYAALTSF), 316 to 336 (MGFVLIGIASFTDLGMSGAVL), 337 to 357 (QMVSHGLIGASLFFLVGATYD), 377 to 399 (IFAMFTTCSMASLALPGMSGFVA), 419 to 439 (VPVVILAGIGVILTPIYLLSM), and 466 to 486 (IFVIACLLVPIIGIGLYPKII).

It belongs to the complex I subunit 4 family.

The protein resides in the cellular thylakoid membrane. It catalyses the reaction a plastoquinone + NADH + (n+1) H(+)(in) = a plastoquinol + NAD(+) + n H(+)(out). The catalysed reaction is a plastoquinone + NADPH + (n+1) H(+)(in) = a plastoquinol + NADP(+) + n H(+)(out). NDH-1 shuttles electrons from NAD(P)H, via FMN and iron-sulfur (Fe-S) centers, to quinones in the respiratory chain. The immediate electron acceptor for the enzyme in this species is believed to be plastoquinone. Couples the redox reaction to proton translocation (for every two electrons transferred, four hydrogen ions are translocated across the cytoplasmic membrane), and thus conserves the redox energy in a proton gradient. The protein is NAD(P)H-quinone oxidoreductase chain 4 of Acaryochloris marina (strain MBIC 11017).